The chain runs to 205 residues: Large ribosomal subunit protein uL4 (205 aa).

Positions 43 to 77 (RRRSGTASTKGRSDVAGSRAKLFRQKGTGRARRGD) are disordered. Positions 63–73 (KLFRQKGTGRA) are enriched in basic residues.

Belongs to the universal ribosomal protein uL4 family. In terms of assembly, part of the 50S ribosomal subunit.

One of the primary rRNA binding proteins, this protein initially binds near the 5'-end of the 23S rRNA. It is important during the early stages of 50S assembly. It makes multiple contacts with different domains of the 23S rRNA in the assembled 50S subunit and ribosome. Its function is as follows. Forms part of the polypeptide exit tunnel. The chain is Large ribosomal subunit protein uL4 from Desulfosudis oleivorans (strain DSM 6200 / JCM 39069 / Hxd3) (Desulfococcus oleovorans).